The following is a 174-amino-acid chain: Negative modulator of initiation of replication (174 aa).

This sequence belongs to the SeqA family. Homodimer. Polymerizes to form helical filaments.

The protein resides in the cytoplasm. In terms of biological role, negative regulator of replication initiation, which contributes to regulation of DNA replication and ensures that replication initiation occurs exactly once per chromosome per cell cycle. Binds to pairs of hemimethylated GATC sequences in the oriC region, thus preventing assembly of replication proteins and re-initiation at newly replicated origins. Repression is relieved when the region becomes fully methylated. This chain is Negative modulator of initiation of replication, found in Pseudoalteromonas atlantica (strain T6c / ATCC BAA-1087).